Consider the following 292-residue polypeptide: MPFQKTIKSEISLTGIGIHTGKKINLNLIPAQRDTGIVFYRKDRNFPIKAKLPFVVDTSFATTLGVDGIKIRTVEHLLATLHVFGITNVFIEIDSSEIPVMDGSAIDFTKAILKAGIAKQGKTVSLFKITKPVYYEESHSKIFAKPYRGFKITYKIFYEHPLIMEQSLSIEINEQNFLNDIAPARTFGFLKDINYLLKNGFAKGGSLDNALVLDEKGVVGGNLRFKDEFVRHKILDAIGDLSLIGYPIQGHFIIEKGGHTSHINFLRKLIETGCYELAEEPYFNFQLSAQAV.

Zn(2+)-binding residues include histidine 76, histidine 232, and aspartate 236. Histidine 259 functions as the Proton donor in the catalytic mechanism.

It belongs to the LpxC family. The cofactor is Zn(2+).

The enzyme catalyses a UDP-3-O-[(3R)-3-hydroxyacyl]-N-acetyl-alpha-D-glucosamine + H2O = a UDP-3-O-[(3R)-3-hydroxyacyl]-alpha-D-glucosamine + acetate. The protein operates within glycolipid biosynthesis; lipid IV(A) biosynthesis; lipid IV(A) from (3R)-3-hydroxytetradecanoyl-[acyl-carrier-protein] and UDP-N-acetyl-alpha-D-glucosamine: step 2/6. Catalyzes the hydrolysis of UDP-3-O-myristoyl-N-acetylglucosamine to form UDP-3-O-myristoylglucosamine and acetate, the committed step in lipid A biosynthesis. This is UDP-3-O-acyl-N-acetylglucosamine deacetylase from Thermodesulfovibrio yellowstonii (strain ATCC 51303 / DSM 11347 / YP87).